Consider the following 180-residue polypeptide: Small ribosomal subunit protein uS4 (180 aa).

Residues 104–166 (RRLQTIVHRK…PTSPFKNNPP (63 aa)) form the S4 RNA-binding domain. Residues 155-180 (FYPTSPFKNNPPTAGQGEVNVEQKGN) are disordered.

Belongs to the universal ribosomal protein uS4 family. Part of the 30S ribosomal subunit. Contacts protein S5. The interaction surface between S4 and S5 is involved in control of translational fidelity.

Its function is as follows. One of the primary rRNA binding proteins, it binds directly to 16S rRNA where it nucleates assembly of the body of the 30S subunit. In terms of biological role, with S5 and S12 plays an important role in translational accuracy. The polypeptide is Small ribosomal subunit protein uS4 (Metallosphaera sedula (strain ATCC 51363 / DSM 5348 / JCM 9185 / NBRC 15509 / TH2)).